Reading from the N-terminus, the 181-residue chain is UPF0398 protein LMOf2365_1918 (181 aa).

It belongs to the UPF0398 family.

This chain is UPF0398 protein LMOf2365_1918, found in Listeria monocytogenes serotype 4b (strain F2365).